The following is a 1383-amino-acid chain: ATP-dependent RNA helicase TDRD9 (1383 aa).

A disordered region spans residues 35-82 (EAPREEVQRSEEVPNEDPTAQAQVPVKATAPARPASTSGRSLSQRSSE). A compositionally biased stretch (basic and acidic residues) spans 36–46 (APREEVQRSEE). The span at 70–80 (STSGRSLSQRS) shows a compositional bias: low complexity. The Helicase ATP-binding domain maps to 144-310 (ISLIESNSVV…FAVPVQNKMN (167 aa)). 157-164 (GATGSGKS) is an ATP binding site. Positions 256–259 (DEVH) match the DEAH box motif. The Helicase C-terminal domain maps to 378-545 (SGAQFVSERS…ILKVKLLDMG (168 aa)). One can recognise a Tudor domain in the interval 945–1005 (HPHPDLVCLA…REIPCQFLEL (61 aa)).

This sequence belongs to the DEAD box helicase family. DEAH subfamily. In terms of assembly, interacts with piRNA-associated proteins PIWIL1 and PIWIL4. In terms of tissue distribution, predominantly expressed in reproductive organs. Detected in mitotic spermatogonia, meiotic spermatocytes (predominantly at the pachytene stage), haploid spermatids in the testis, and in growing oocytes in the ovary (at protein level).

It localises to the cytoplasm. Its subcellular location is the nucleus. The catalysed reaction is ATP + H2O = ADP + phosphate + H(+). In terms of biological role, ATP-binding RNA helicase which plays a central role during spermatogenesis by repressing transposable elements and preventing their mobilization, which is essential for the germline integrity. Acts via the piRNA metabolic process, which mediates the repression of transposable elements during meiosis by forming complexes composed of piRNAs and Piwi proteins and governs the methylation and subsequent repression of transposons. Acts downstream of piRNA biogenesis: exclusively required for transposon silencing in the nucleus, suggesting that it acts as a nuclear effector in the nucleus together with PIWIL4. This Mus musculus (Mouse) protein is ATP-dependent RNA helicase TDRD9.